The chain runs to 80 residues: Acyl carrier protein (80 aa).

The region spanning 4 to 79 (DEIFSKVRSI…DVVNFIKKRK (76 aa)) is the Carrier domain. Residue serine 39 is modified to O-(pantetheine 4'-phosphoryl)serine.

The protein belongs to the acyl carrier protein (ACP) family. In terms of processing, 4'-phosphopantetheine is transferred from CoA to a specific serine of apo-ACP by AcpS. This modification is essential for activity because fatty acids are bound in thioester linkage to the sulfhydryl of the prosthetic group.

It localises to the cytoplasm. The protein operates within lipid metabolism; fatty acid biosynthesis. Carrier of the growing fatty acid chain in fatty acid biosynthesis. In Borreliella burgdorferi (strain ATCC 35210 / DSM 4680 / CIP 102532 / B31) (Borrelia burgdorferi), this protein is Acyl carrier protein.